We begin with the raw amino-acid sequence, 340 residues long: MRPILLSGHERSLNQIKFNRDGDLLFSVAKDKIVCAWWSANGERLGTYSGHQGAIWTVDVSPNTVLLATGSADNTVRLWNVKTGECVKVWDFPTAVKRVAFNPDGSRLLAVTEKRMGFLGTIAVLDINYGDSQGGGLENQADEPSLRITCTESKATVAGWSYLGKYIIAGHEDGSVSQYDGKTGEQLENVQAHEFDHQINDIQFSQDRTYFITASKDKSAKLISSRNLAILKTYVADTPLNSATITPKKDYVILGGGQAAMDVTTTSARQGKFEARFYHKVFEDEIGRVRGHFGPLNTVDVHPNGTAYASGGEDGYVRVHHFDKPYFDFMYEVEREQLRK.

WD repeat units lie at residues 8–47 (GHER…RLGT), 50–91 (GHQG…KVWD), 150–189 (CTES…QLEN), 194–233 (EFDH…ILKT), and 291–330 (GHFG…FDFM).

This sequence belongs to the eIF-3 subunit I family. In terms of assembly, component of the eukaryotic translation initiation factor 3 (eIF-3) complex.

The protein localises to the cytoplasm. Component of the eukaryotic translation initiation factor 3 (eIF-3) complex, which is involved in protein synthesis of a specialized repertoire of mRNAs and, together with other initiation factors, stimulates binding of mRNA and methionyl-tRNAi to the 40S ribosome. The eIF-3 complex specifically targets and initiates translation of a subset of mRNAs involved in cell proliferation. The protein is Eukaryotic translation initiation factor 3 subunit I (tif34) of Aspergillus fumigatus (strain CBS 144.89 / FGSC A1163 / CEA10) (Neosartorya fumigata).